Here is a 637-residue protein sequence, read N- to C-terminus: Chaperone protein HtpG (637 aa).

Positions 1 to 335 (MQGTVNSERL…SSDLPLNISR (335 aa)) are a; substrate-binding. Residues 336–559 (ETLQNNKIIE…DGSMDIRMER (224 aa)) form a b region. Residues 560 to 637 (FLREQKQLNY…RMNNVLSQIN (78 aa)) form a c region.

It belongs to the heat shock protein 90 family. Homodimer.

The protein localises to the cytoplasm. In terms of biological role, molecular chaperone. Has ATPase activity. The sequence is that of Chaperone protein HtpG from Ehrlichia ruminantium (strain Welgevonden).